Consider the following 210-residue polypeptide: 2,3-bisphosphoglycerate-dependent phosphoglycerate mutase (210 aa).

Substrate-binding positions include arginine 9 to asparagine 16, threonine 22 to glycine 23, arginine 61, glutamate 88 to tyrosine 91, lysine 99, arginine 115 to arginine 116, and glycine 159 to asparagine 160. Histidine 10 acts as the Tele-phosphohistidine intermediate in catalysis. The Proton donor/acceptor role is filled by glutamate 88.

This sequence belongs to the phosphoglycerate mutase family. BPG-dependent PGAM subfamily. Homodimer.

It catalyses the reaction (2R)-2-phosphoglycerate = (2R)-3-phosphoglycerate. It participates in carbohydrate degradation; glycolysis; pyruvate from D-glyceraldehyde 3-phosphate: step 3/5. Functionally, catalyzes the interconversion of 2-phosphoglycerate and 3-phosphoglycerate. The protein is 2,3-bisphosphoglycerate-dependent phosphoglycerate mutase of Parvibaculum lavamentivorans (strain DS-1 / DSM 13023 / NCIMB 13966).